The following is a 65-amino-acid chain: Small ribosomal subunit protein bS21 (65 aa).

The protein belongs to the bacterial ribosomal protein bS21 family.

This Acidobacterium capsulatum (strain ATCC 51196 / DSM 11244 / BCRC 80197 / JCM 7670 / NBRC 15755 / NCIMB 13165 / 161) protein is Small ribosomal subunit protein bS21.